A 184-amino-acid polypeptide reads, in one-letter code: Tumor necrosis factor receptor superfamily member 17 (184 aa).

Residues 1-54 (MLQMAGQCSQNEYFDSLLHACIPCQLRCSSNTPPLTCQRYCNASVTNSVKGTNA) lie on the Extracellular side of the membrane. The stretch at 7 to 41 (QCSQNEYFDSLLHACIPCQLRCSSNTPPLTCQRYC) is one TNFR-Cys repeat. Disulfide bonds link Cys-8/Cys-21, Cys-24/Cys-37, and Cys-28/Cys-41. A helical; Signal-anchor for type III membrane protein membrane pass occupies residues 55 to 77 (ILWTCLGLSLIISLAVFVLMFLL). The Cytoplasmic portion of the chain corresponds to 78–184 (RKINSEPLKD…TEIEKSISAR (107 aa)).

As to quaternary structure, associates with TRAF1, TRAF2, TRAF3, TRAF5 and TRAF6. Expressed in mature B-cells, but not in T-cells or monocytes.

It localises to the cell membrane. Its subcellular location is the endomembrane system. Receptor for TNFSF13B/BLyS/BAFF and TNFSF13/APRIL. Promotes B-cell survival and plays a role in the regulation of humoral immunity. Activates NF-kappa-B and JNK. The protein is Tumor necrosis factor receptor superfamily member 17 (TNFRSF17) of Homo sapiens (Human).